The primary structure comprises 147 residues: Hemoglobin subunit epsilon (147 aa).

The Globin domain occupies 3–147 (HFTAEEKATI…VATALAHKYH (145 aa)). Phosphoserine is present on residues S14 and S51. Positions 64 and 93 each coordinate heme b.

It belongs to the globin family. As to quaternary structure, heterotetramer of two alpha chains and two epsilon chains in early embryonic hemoglobin Gower-2; two zeta chains and two epsilon chains in early embryonic hemoglobin Gower-1. Red blood cells.

The epsilon chain is a beta-type chain of early mammalian embryonic hemoglobin. This Daubentonia madagascariensis (Aye-aye) protein is Hemoglobin subunit epsilon (HBE1).